Reading from the N-terminus, the 316-residue chain is Nod factor export ATP-binding protein I (316 aa).

An ABC transporter domain is found at 18–248 (IDFSDVSKTY…LIGCEVIEIY (231 aa)). Residue 50–57 (GPNGAGKS) coordinates ATP.

This sequence belongs to the ABC transporter superfamily. Lipooligosaccharide exporter (TC 3.A.1.102) family. As to quaternary structure, the complex is composed of two ATP-binding proteins (NodI) and two transmembrane proteins (NodJ).

It localises to the cell inner membrane. Part of the ABC transporter complex NodIJ involved in the export of the nodulation factors (Nod factors), the bacterial signal molecules that induce symbiosis and subsequent nodulation induction. Nod factors are LCO (lipo-chitin oligosaccharide), a modified beta-1,4-linked N-acetylglucosamine oligosaccharide. This subunit is responsible for energy coupling to the transport system. This is Nod factor export ATP-binding protein I from Rhizobium etli (strain ATCC 51251 / DSM 11541 / JCM 21823 / NBRC 15573 / CFN 42).